A 346-amino-acid chain; its full sequence is Methionine import ATP-binding protein MetN 1 (346 aa).

Residues 2–241 (IELKNVSKVF…PQHVTTKKFV (240 aa)) form the ABC transporter domain. 38-45 (GYSGAGKS) contacts ATP.

This sequence belongs to the ABC transporter superfamily. Methionine importer (TC 3.A.1.24) family. As to quaternary structure, the complex is composed of two ATP-binding proteins (MetN), two transmembrane proteins (MetI) and a solute-binding protein (MetQ).

It is found in the cell membrane. It carries out the reaction L-methionine(out) + ATP + H2O = L-methionine(in) + ADP + phosphate + H(+). The catalysed reaction is D-methionine(out) + ATP + H2O = D-methionine(in) + ADP + phosphate + H(+). In terms of biological role, part of the ABC transporter complex MetNIQ involved in methionine import. Responsible for energy coupling to the transport system. The protein is Methionine import ATP-binding protein MetN 1 of Bacillus anthracis.